The following is a 776-amino-acid chain: Heat shock protein 110 (776 aa).

Positions 741-776 (ILNKKKPAAPAPPKKEEPQPAAGDQPQSQPGEMDVD) are disordered.

It belongs to the heat shock protein 70 family.

The chain is Heat shock protein 110 from Caenorhabditis elegans.